The sequence spans 340 residues: Glycerol-3-phosphate dehydrogenase [NAD(P)+] (340 aa).

Residues serine 15, tyrosine 16, histidine 36, and lysine 110 each coordinate NADPH. Residues lysine 110, glycine 139, and threonine 141 each contribute to the sn-glycerol 3-phosphate site. Alanine 143 is a binding site for NADPH. Sn-glycerol 3-phosphate-binding residues include lysine 195, aspartate 248, serine 258, arginine 259, and asparagine 260. Lysine 195 acts as the Proton acceptor in catalysis. Arginine 259 provides a ligand contact to NADPH. NADPH-binding residues include valine 283 and glutamate 285.

Belongs to the NAD-dependent glycerol-3-phosphate dehydrogenase family.

It localises to the cytoplasm. It catalyses the reaction sn-glycerol 3-phosphate + NAD(+) = dihydroxyacetone phosphate + NADH + H(+). The enzyme catalyses sn-glycerol 3-phosphate + NADP(+) = dihydroxyacetone phosphate + NADPH + H(+). It participates in membrane lipid metabolism; glycerophospholipid metabolism. Its function is as follows. Catalyzes the reduction of the glycolytic intermediate dihydroxyacetone phosphate (DHAP) to sn-glycerol 3-phosphate (G3P), the key precursor for phospholipid synthesis. The sequence is that of Glycerol-3-phosphate dehydrogenase [NAD(P)+] from Baumannia cicadellinicola subsp. Homalodisca coagulata.